The following is a 117-amino-acid chain: Aspartate 1-decarboxylase (117 aa).

S25 serves as the catalytic Schiff-base intermediate with substrate; via pyruvic acid. At S25 the chain carries Pyruvic acid (Ser). T57 lines the substrate pocket. Catalysis depends on Y58, which acts as the Proton donor. Residue 72 to 74 (GAA) coordinates substrate.

It belongs to the PanD family. In terms of assembly, heterooctamer of four alpha and four beta subunits. Requires pyruvate as cofactor. In terms of processing, is synthesized initially as an inactive proenzyme, which is activated by self-cleavage at a specific serine bond to produce a beta-subunit with a hydroxyl group at its C-terminus and an alpha-subunit with a pyruvoyl group at its N-terminus.

The protein resides in the cytoplasm. The enzyme catalyses L-aspartate + H(+) = beta-alanine + CO2. It functions in the pathway cofactor biosynthesis; (R)-pantothenate biosynthesis; beta-alanine from L-aspartate: step 1/1. Functionally, catalyzes the pyruvoyl-dependent decarboxylation of aspartate to produce beta-alanine. The polypeptide is Aspartate 1-decarboxylase (Helicobacter pylori (strain J99 / ATCC 700824) (Campylobacter pylori J99)).